The sequence spans 312 residues: Speedy protein A (312 aa).

Positions 67–199 are speedy/Ringo box; Required for CDK-binding; sequence RQEMTAFFKL…SHYIWQRERS (133 aa). S221 is modified (phosphoserine). T223 bears the Phosphothreonine mark.

The protein belongs to the Speedy/Ringo family. As to quaternary structure, interacts with CDK1. Interacts with CDK2. May interact with CDKN1B/KIP1. Identified in a complex with CDK2 and CDKN1B/KIP1, where it interacts primarily with CDK2.

The protein resides in the nucleus. Regulates the G1/S phase transition of the cell cycle by binding and activating CDK1 and CDK2. Contributes to CDK2 activation without promoting CDK2 phosphorylation, by inducing a conformation change of the CDK2 T-loop that obstructs the substrate-binding cleft prior to kinase activation. Interferes with CDKN1B-mediated inhibition of CDK2. Mediates cell survival during the DNA damage process through activation of CDK2. The sequence is that of Speedy protein A from Rattus norvegicus (Rat).